The following is a 457-amino-acid chain: tRNA modification GTPase MnmE (457 aa).

The (6S)-5-formyl-5,6,7,8-tetrahydrofolate site is built by arginine 25, glutamate 87, and arginine 126. The TrmE-type G domain maps to 223–377 (GISTAIIGRP…IEERINNLFF (155 aa)). K(+) is bound at residue asparagine 233. GTP-binding positions include 233–238 (NVGKSS), 252–258 (TDIAGTT), and 277–280 (DTAG). Residue serine 237 participates in Mg(2+) binding. 3 residues coordinate K(+): threonine 252, isoleucine 254, and threonine 257. Mg(2+) is bound at residue threonine 258. (6S)-5-formyl-5,6,7,8-tetrahydrofolate is bound at residue lysine 457.

It belongs to the TRAFAC class TrmE-Era-EngA-EngB-Septin-like GTPase superfamily. TrmE GTPase family. As to quaternary structure, homodimer. Heterotetramer of two MnmE and two MnmG subunits. The cofactor is K(+).

It is found in the cytoplasm. Exhibits a very high intrinsic GTPase hydrolysis rate. Involved in the addition of a carboxymethylaminomethyl (cmnm) group at the wobble position (U34) of certain tRNAs, forming tRNA-cmnm(5)s(2)U34. This is tRNA modification GTPase MnmE from Streptococcus pneumoniae (strain Hungary19A-6).